We begin with the raw amino-acid sequence, 466 residues long: Probable fibrosin-1 (466 aa).

K8 is covalently cross-linked (Glycyl lysine isopeptide (Lys-Gly) (interchain with G-Cter in SUMO2)). An asymmetric dimethylarginine mark is found at R229 and R239. Disordered regions lie at residues 236 to 315 (AWVR…AAAA) and 410 to 466 (LLYS…RADR). Positions 248-272 (GSDKERPMERREPSVTKEEKDRDLP) are enriched in basic and acidic residues. The residue at position 281 (S281) is a Phosphoserine. The span at 288-311 (RAGEEGARPAKESVRVKEERKEEA) shows a compositional bias: basic and acidic residues. Residues 442–459 (APPPLVPAPRPSSPPRAP) are compositionally biased toward pro residues.

This chain is Probable fibrosin-1 (Fbrs), found in Mus musculus (Mouse).